The sequence spans 717 residues: Methionine--tRNA ligase (717 aa).

The 'HIGH' region motif lies at 19–29 (PYANGDLHVGH). Residues cysteine 150, cysteine 153, cysteine 162, and cysteine 166 each contribute to the Zn(2+) site. A 'KMSKS' region motif is present at residues 356-360 (ALSTS). Threonine 359 serves as a coordination point for ATP. Residues 573 to 603 (ERVEEASEASAEASNEGGEAAGDEVDDGDVD) form a disordered region. The span at 580 to 590 (EASAEASNEGG) shows a compositional bias: low complexity. A compositionally biased stretch (acidic residues) spans 593–603 (AGDEVDDGDVD). The region spanning 619-717 (DFEGVDMRVG…EDAPLGTRIK (99 aa)) is the tRNA-binding domain.

Belongs to the class-I aminoacyl-tRNA synthetase family. MetG type 1 subfamily. Homodimer. It depends on Zn(2+) as a cofactor.

It is found in the cytoplasm. The catalysed reaction is tRNA(Met) + L-methionine + ATP = L-methionyl-tRNA(Met) + AMP + diphosphate. Its function is as follows. Is required not only for elongation of protein synthesis but also for the initiation of all mRNA translation through initiator tRNA(fMet) aminoacylation. The protein is Methionine--tRNA ligase of Haloarcula marismortui (strain ATCC 43049 / DSM 3752 / JCM 8966 / VKM B-1809) (Halobacterium marismortui).